The sequence spans 395 residues: S-adenosylmethionine synthase 3 (395 aa).

Position 10 (Glu10) interacts with Mg(2+). His16 contacts ATP. Glu44 contributes to the K(+) binding site. Residues Glu57 and Gln100 each contribute to the L-methionine site. ATP-binding positions include 168–170, 236–239, Asp247, 253–254, Ala270, Lys274, and Lys278; these read DGK, SGRF, and RK. L-methionine is bound at residue Asp247. Lys278 lines the L-methionine pocket.

It belongs to the AdoMet synthase family. Homotetramer. Mn(2+) serves as cofactor. It depends on Mg(2+) as a cofactor. The cofactor is Co(2+). K(+) is required as a cofactor.

Its subcellular location is the cytoplasm. It carries out the reaction L-methionine + ATP + H2O = S-adenosyl-L-methionine + phosphate + diphosphate. Its pathway is amino-acid biosynthesis; S-adenosyl-L-methionine biosynthesis; S-adenosyl-L-methionine from L-methionine: step 1/1. Functionally, catalyzes the formation of S-adenosylmethionine from methionine and ATP. The reaction comprises two steps that are both catalyzed by the same enzyme: formation of S-adenosylmethionine (AdoMet) and triphosphate, and subsequent hydrolysis of the triphosphate. The chain is S-adenosylmethionine synthase 3 (METK3) from Populus trichocarpa (Western balsam poplar).